A 330-amino-acid chain; its full sequence is Protoheme IX farnesyltransferase (330 aa).

9 helical membrane-spanning segments follow: residues 33-53 (VMTL…VDAD), 54-74 (PFLA…AGAL), 101-121 (VSNA…LMAL), 126-146 (LAAG…TMIL), 154-174 (IVIG…AATG), 180-200 (AVIL…ALAL), 227-247 (ILLY…TGLG), 250-270 (VYGA…WRIF), and 308-328 (VLFA…IPGV).

It belongs to the UbiA prenyltransferase family. Protoheme IX farnesyltransferase subfamily. Interacts with CtaA.

Its subcellular location is the cell inner membrane. The enzyme catalyses heme b + (2E,6E)-farnesyl diphosphate + H2O = Fe(II)-heme o + diphosphate. Its pathway is porphyrin-containing compound metabolism; heme O biosynthesis; heme O from protoheme: step 1/1. Converts heme B (protoheme IX) to heme O by substitution of the vinyl group on carbon 2 of heme B porphyrin ring with a hydroxyethyl farnesyl side group. This is Protoheme IX farnesyltransferase from Maricaulis maris (strain MCS10) (Caulobacter maris).